The primary structure comprises 285 residues: Protease HtpX homolog (285 aa).

Transmembrane regions (helical) follow at residues 7-27 (TAML…MIGG) and 30-50 (GMTI…WFSD). His131 is a Zn(2+) binding site. Residue Glu132 is part of the active site. His135 contributes to the Zn(2+) binding site. Helical transmembrane passes span 146-166 (ISAT…FFGG) and 177-197 (IAGI…QMAI). Glu202 lines the Zn(2+) pocket.

It belongs to the peptidase M48B family. It depends on Zn(2+) as a cofactor.

It localises to the cell inner membrane. This Burkholderia mallei (strain NCTC 10247) protein is Protease HtpX homolog.